Consider the following 604-residue polypeptide: Ectonucleoside triphosphate diphosphohydrolase 7 (604 aa).

Topologically, residues 1–28 (MARISFSYLCPASWYFTVPTVSPFLRQR) are cytoplasmic. Residues 29-49 (VAFLGLFFISCLLLLMLIIDF) form a helical membrane-spanning segment. The Vesicular portion of the chain corresponds to 50-546 (RHWSASLPRD…QAHGSWFRLS (497 aa)). The active-site Proton acceptor is the Glu-217. N-linked (GlcNAc...) asparagine glycosylation is present at Asn-330. Residues Cys-448 and Cys-477 are joined by a disulfide bond. Residues 547–567 (FVYNHYLFFACILVVLLAIFL) traverse the membrane as a helical segment. At 568–604 (YLLRLRRIHHRQTRASAPLDLLWLEEVVPMMGVQVGP) the chain is on the cytoplasmic side.

This sequence belongs to the GDA1/CD39 NTPase family. Ca(2+) serves as cofactor. Mg(2+) is required as a cofactor.

It localises to the cytoplasmic vesicle membrane. It catalyses the reaction a ribonucleoside 5'-triphosphate + H2O = a ribonucleoside 5'-diphosphate + phosphate + H(+). The enzyme catalyses UTP + H2O = UDP + phosphate + H(+). The catalysed reaction is GTP + H2O = GDP + phosphate + H(+). It carries out the reaction CTP + H2O = CDP + phosphate + H(+). Functionally, catalyzes the hydrolysis of nucleoside triphosphates and diphosphates in a calcium- or magnesium-dependent manner. Preferentially hydrolyzes nucleoside 5'-triphosphates, with substrate preference for UTP &gt; GTP &gt; CTP. Hydrolyzes ATP and nucleoside diphosphates only to a minor extent. In Homo sapiens (Human), this protein is Ectonucleoside triphosphate diphosphohydrolase 7 (ENTPD7).